We begin with the raw amino-acid sequence, 58 residues long: MKTIKVTQIKSASHRLKNHKLCLQGLGLRRIGHTVEVQDTPSNRGMINKVYYMVSVEE.

It belongs to the universal ribosomal protein uL30 family. As to quaternary structure, part of the 50S ribosomal subunit.

This Acinetobacter baylyi (strain ATCC 33305 / BD413 / ADP1) protein is Large ribosomal subunit protein uL30.